The primary structure comprises 165 residues: Regulator of ribonuclease activity A (165 aa).

The protein belongs to the RraA family. In terms of assembly, homotrimer. Binds to both RNA-binding sites in the C-terminal region of Rne and to RhlB.

It localises to the cytoplasm. Its function is as follows. Globally modulates RNA abundance by binding to RNase E (Rne) and regulating its endonucleolytic activity. Can modulate Rne action in a substrate-dependent manner by altering the composition of the degradosome. Modulates RNA-binding and helicase activities of the degradosome. This Actinobacillus pleuropneumoniae serotype 5b (strain L20) protein is Regulator of ribonuclease activity A.